The chain runs to 304 residues: Recombination-associated protein RdgC (304 aa).

Belongs to the RdgC family.

The protein localises to the cytoplasm. It localises to the nucleoid. Its function is as follows. May be involved in recombination. The sequence is that of Recombination-associated protein RdgC from Shewanella baltica (strain OS223).